A 944-amino-acid polypeptide reads, in one-letter code: Trehalose monomycolate exporter MmpL3 (944 aa).

Residues 1 to 13 (MFAWWGRTVYRYR) are Cytoplasmic-facing. A helical membrane pass occupies residues 14–34 (FIVIGVMVALCLGGGVFGLSL). Over 35–185 (GKHVTQSGFY…TIATDQRRME (151 aa)) the chain is Periplasmic. 40–44 (QSGFY) provides a ligand contact to a 1,2-diacylglycero-3-phosphoethanolamine. Residues 186–206 (VLALPLVAVVLFFVFGGVIAA) traverse the membrane as a helical segment. The Cytoplasmic portion of the chain corresponds to 207–209 (GLP). A helical membrane pass occupies residues 210–230 (VMVGGLCIAGALGIMRFLAIF). At 231-235 (GPVHY) the chain is on the periplasmic side. A helical membrane pass occupies residues 236 to 256 (FAQPVVSLIGLGIAIDYGLFI). Residues 257–286 (VSRFREEIAEGYDTETAVRRTVITAGRTVT) lie on the Cytoplasmic side of the membrane. A helical transmembrane segment spans residues 287–307 (FSAVLIVASAIGLLLFPQGFL). The Periplasmic portion of the chain corresponds to 308 to 314 (KSLTYAT). The chain crosses the membrane as a helical span at residues 315 to 335 (IASVMLSAILSITVLPACLGI). The Cytoplasmic portion of the chain corresponds to 336–396 (LGKHVDALGV…KLVNRVMKRP (61 aa)). A helical membrane pass occupies residues 397-417 (VLFAAPIVIIMILLIIPVGKL). Residues 418-562 (SLGGISEKYL…HGLFAKMPLM (145 aa)) lie on the Periplasmic side of the membrane. A helical membrane pass occupies residues 563–583 (VVILLTTTIVLMFLAFGSVVL). At 584 to 586 (PIK) the chain is on the cytoplasmic side. A helical membrane pass occupies residues 587 to 607 (ATLMSALTLGSTMGILTWIFV). Residues 608–616 (DGHFSKWLN) lie on the Periplasmic side of the membrane. Residues 617–637 (FTPTPLTAPVIGLIIALVFGL) form a helical membrane-spanning segment. Residues 638 to 672 (STDYEVFLVSRMVEARERGMSTQEAIRIGTAATGR) lie on the Cytoplasmic side of the membrane. The helical transmembrane segment at 673–693 (IITAAALIVAVVAGAFVFSDL) threads the bilayer. Over 694–698 (VMMKY) the chain is Periplasmic. Residues 699–719 (LAFGLMAALLLDATVVRMFLV) form a helical membrane-spanning segment. Over 720–944 (PSVMKLLGDD…QDLLRREGRL (225 aa)) the chain is Cytoplasmic. The disordered stretch occupies residues 778-944 (AAGDPRPPHD…QDLLRREGRL (167 aa)). Residues 791 to 828 (PLAESPRPARSSPASSPELTPALEATAAPAAPSGASTT) are compositionally biased toward low complexity. Residues 829 to 839 (RMQIGSSTEPP) are compositionally biased toward polar residues. The span at 855-866 (STPPPTPTPPSA) shows a compositional bias: pro residues.

Belongs to the resistance-nodulation-cell division (RND) (TC 2.A.6) family. MmpL subfamily. Monomer. Interacts with TtfA (via N-terminus); active trehalose monomycolate (TMM) biosynthesis is not required for the complex formation.

Its subcellular location is the cell inner membrane. The protein resides in the cell septum. It is found in the cell tip. Transports trehalose monomycolate (TMM) to the cell wall. Flips TMM across the inner membrane. Membrane potential is not required for this function. Transports probably phosphatidylethanolamine (PE) as well. Binds specifically both TMM and PE, but not trehalose dimycolate (TDM). Also binds diacylglycerol (DAG) and other phospholipids, including phosphatidylglycerol (PG), phosphatidylinositol (PI), and cardiolipin (CDL). Contributes to membrane potential, cell wall composition, antibiotic susceptibility and fitness. Could also be part of a heme-iron acquisition system. This is Trehalose monomycolate exporter MmpL3 (mmpL3) from Mycobacterium tuberculosis (strain CDC 1551 / Oshkosh).